Consider the following 24-residue polypeptide: Cytochrome c oxidase subunit 7A2, mitochondrial (24 aa).

Residues 1-13 (FENKVPEKQKLFQ) show a composition bias toward basic and acidic residues. The interval 1-24 (FENKVPEKQKLFQEDNGIPVHLKG) is disordered. N6-acetyllysine is present on Lys-10.

It belongs to the cytochrome c oxidase VIIa family. As to quaternary structure, component of the cytochrome c oxidase (complex IV, CIV), a multisubunit enzyme composed of 14 subunits. The complex is composed of a catalytic core of 3 subunits MT-CO1, MT-CO2 and MT-CO3, encoded in the mitochondrial DNA, and 11 supernumerary subunits COX4I, COX5A, COX5B, COX6A, COX6B, COX6C, COX7A, COX7B, COX7C, COX8 and NDUFA4, which are encoded in the nuclear genome. The complex exists as a monomer or a dimer and forms supercomplexes (SCs) in the inner mitochondrial membrane with NADH-ubiquinone oxidoreductase (complex I, CI) and ubiquinol-cytochrome c oxidoreductase (cytochrome b-c1 complex, complex III, CIII), resulting in different assemblies (supercomplex SCI(1)III(2)IV(1) and megacomplex MCI(2)III(2)IV(2)). Interacts with PET100.

Its subcellular location is the mitochondrion inner membrane. Its pathway is energy metabolism; oxidative phosphorylation. Component of the cytochrome c oxidase, the last enzyme in the mitochondrial electron transport chain which drives oxidative phosphorylation. The respiratory chain contains 3 multisubunit complexes succinate dehydrogenase (complex II, CII), ubiquinol-cytochrome c oxidoreductase (cytochrome b-c1 complex, complex III, CIII) and cytochrome c oxidase (complex IV, CIV), that cooperate to transfer electrons derived from NADH and succinate to molecular oxygen, creating an electrochemical gradient over the inner membrane that drives transmembrane transport and the ATP synthase. Cytochrome c oxidase is the component of the respiratory chain that catalyzes the reduction of oxygen to water. Electrons originating from reduced cytochrome c in the intermembrane space (IMS) are transferred via the dinuclear copper A center (CU(A)) of subunit 2 and heme A of subunit 1 to the active site in subunit 1, a binuclear center (BNC) formed by heme A3 and copper B (CU(B)). The BNC reduces molecular oxygen to 2 water molecules using 4 electrons from cytochrome c in the IMS and 4 protons from the mitochondrial matrix. In Ovis aries (Sheep), this protein is Cytochrome c oxidase subunit 7A2, mitochondrial (COX7A2).